A 365-amino-acid polypeptide reads, in one-letter code: MANAKSSSLPSWKNPSGKTLLILLWALALALMALLSSWADMPWLSNGKLLIALGFTALVTALIGMAVVPMLVNLKASQVIQSDGPQSHLKKAGTPTMGGIFFVPVAVAIAVVGTQFNPDVIVVGLVTLGYMAIGWVDDWQILKYKSNKGLTPKQKLFLQVAIAVIFCTWLFFYGPTEITDIRIMQFVLPLGFLFWLVATFALVAESNATNLTDGVDGLAAGTGAIAFVGLGLLVAKENPALAFFCCAMAGGCIGFVHHNHNPARVFMGDTGSLALGGSLAAVGIMTGNLWGLLLISGIFLAESLSVIAQVGYYKATKGPDGVGKRLLKMAPIHHHLELSGWTETQIVGSFYLINTLLAIVAMATA.

The next 10 membrane-spanning stretches (helical) occupy residues 19 to 39 (TLLI…SSWA), 49 to 69 (LLIA…AVVP), 92 to 112 (AGTP…IAVV), 116 to 136 (FNPD…IGWV), 156 to 176 (LFLQ…YGPT), 183 to 203 (IMQF…FALV), 215 to 235 (VDGL…LLVA), 238 to 258 (NPAL…FVHH), 279 to 299 (LAAV…SGIF), and 345 to 365 (QIVG…MATA).

Belongs to the glycosyltransferase 4 family. MraY subfamily. Mg(2+) serves as cofactor.

It localises to the cell inner membrane. The enzyme catalyses UDP-N-acetyl-alpha-D-muramoyl-L-alanyl-gamma-D-glutamyl-meso-2,6-diaminopimeloyl-D-alanyl-D-alanine + di-trans,octa-cis-undecaprenyl phosphate = di-trans,octa-cis-undecaprenyl diphospho-N-acetyl-alpha-D-muramoyl-L-alanyl-D-glutamyl-meso-2,6-diaminopimeloyl-D-alanyl-D-alanine + UMP. It participates in cell wall biogenesis; peptidoglycan biosynthesis. Functionally, catalyzes the initial step of the lipid cycle reactions in the biosynthesis of the cell wall peptidoglycan: transfers peptidoglycan precursor phospho-MurNAc-pentapeptide from UDP-MurNAc-pentapeptide onto the lipid carrier undecaprenyl phosphate, yielding undecaprenyl-pyrophosphoryl-MurNAc-pentapeptide, known as lipid I. This Synechocystis sp. (strain ATCC 27184 / PCC 6803 / Kazusa) protein is Phospho-N-acetylmuramoyl-pentapeptide-transferase.